A 347-amino-acid polypeptide reads, in one-letter code: Phosphoribosylformylglycinamidine cyclo-ligase (347 aa).

It belongs to the AIR synthase family.

The protein resides in the cytoplasm. It catalyses the reaction 2-formamido-N(1)-(5-O-phospho-beta-D-ribosyl)acetamidine + ATP = 5-amino-1-(5-phospho-beta-D-ribosyl)imidazole + ADP + phosphate + H(+). The protein operates within purine metabolism; IMP biosynthesis via de novo pathway; 5-amino-1-(5-phospho-D-ribosyl)imidazole from N(2)-formyl-N(1)-(5-phospho-D-ribosyl)glycinamide: step 2/2. The polypeptide is Phosphoribosylformylglycinamidine cyclo-ligase (Bacillus cytotoxicus (strain DSM 22905 / CIP 110041 / 391-98 / NVH 391-98)).